The following is a 505-amino-acid chain: N-succinylglutamate 5-semialdehyde dehydrogenase (505 aa).

NAD(+) is bound at residue 234-239 (GSAHTG). Catalysis depends on residues Glu257 and Cys291.

Belongs to the aldehyde dehydrogenase family. AstD subfamily.

It catalyses the reaction N-succinyl-L-glutamate 5-semialdehyde + NAD(+) + H2O = N-succinyl-L-glutamate + NADH + 2 H(+). Its pathway is amino-acid degradation; L-arginine degradation via AST pathway; L-glutamate and succinate from L-arginine: step 4/5. Its function is as follows. Catalyzes the NAD-dependent reduction of succinylglutamate semialdehyde into succinylglutamate. The sequence is that of N-succinylglutamate 5-semialdehyde dehydrogenase from Yersinia pestis (strain Pestoides F).